Here is a 390-residue protein sequence, read N- to C-terminus: Serine/threonine/tyrosine-protein kinase HT1 (390 aa).

One can recognise a Protein kinase domain in the interval 86–359; it reads LFIGNKFASG…GLPLTSHASL (274 aa). Residues 92-100 and K113 contribute to the ATP site; that span reads FASGAHSRI. The Proton acceptor role is filled by D212.

This sequence belongs to the protein kinase superfamily. Ser/Thr protein kinase family. As to quaternary structure, interacts with DTX56. Binds to MPK4 and MPK12. Associates to CBC1 and CBC2. Post-translationally, autophosphorylated. Mainly localizes in guard cells. Expressed at low level in leaves, stems, roots and flowers.

It is found in the cell membrane. The enzyme catalyses L-seryl-[protein] + ATP = O-phospho-L-seryl-[protein] + ADP + H(+). It carries out the reaction L-threonyl-[protein] + ATP = O-phospho-L-threonyl-[protein] + ADP + H(+). It catalyses the reaction L-tyrosyl-[protein] + ATP = O-phospho-L-tyrosyl-[protein] + ADP + H(+). With respect to regulation, inhibited by MPK4 and MPK12. Serine/threonine/tyrosine kinase involved in the control of stomatal movement in response to CO(2). Functions as a major negative regulator of CO(2)-induced stomatal closing. Does not seem to be involved in stomatal closure in response to abscisic acid (ABA) or light. Involved in the control of red light-induced stomatal opening. Is epistatic to SRK2E/OST1 function during stomatal responses to red light and altered CO(2). Phosphorylates SRK2E/OST1 and GHR1 to prevents SRK2E/OST1- and GHR1-induced activation of SLAC1, thus preventing stomatal closure. Mediates the phosphorylation of CBC1 and CBC2. This Arabidopsis thaliana (Mouse-ear cress) protein is Serine/threonine/tyrosine-protein kinase HT1.